The chain runs to 387 residues: S-adenosylmethionine synthase (387 aa).

His15 contributes to the ATP binding site. Asp17 lines the Mg(2+) pocket. Glu43 is a K(+) binding site. 2 residues coordinate L-methionine: Glu56 and Gln99. Residues Gln99 to Asn109 form a flexible loop region. Residues Asp166–Lys168, Arg232–Phe233, Asp241, Arg247–Lys248, Ala264, and Lys268 each bind ATP. Asp241 lines the L-methionine pocket. Lys272 lines the L-methionine pocket.

Belongs to the AdoMet synthase family. Homotetramer; dimer of dimers. The cofactor is Mg(2+). Requires K(+) as cofactor.

It localises to the cytoplasm. The enzyme catalyses L-methionine + ATP + H2O = S-adenosyl-L-methionine + phosphate + diphosphate. It functions in the pathway amino-acid biosynthesis; S-adenosyl-L-methionine biosynthesis; S-adenosyl-L-methionine from L-methionine: step 1/1. Catalyzes the formation of S-adenosylmethionine (AdoMet) from methionine and ATP. The overall synthetic reaction is composed of two sequential steps, AdoMet formation and the subsequent tripolyphosphate hydrolysis which occurs prior to release of AdoMet from the enzyme. This is S-adenosylmethionine synthase from Methylobacillus flagellatus (strain ATCC 51484 / DSM 6875 / VKM B-1610 / KT).